A 121-amino-acid chain; its full sequence is Large ribosomal subunit protein uL18 (121 aa).

A disordered region spans residues Ala-63–Lys-88. Residues Lys-73–Leu-87 show a composition bias toward basic residues.

Belongs to the universal ribosomal protein uL18 family. As to quaternary structure, component of the large ribosomal subunit (LSU).

The protein resides in the cytoplasm. Its subcellular location is the nucleus. Its function is as follows. Component of the ribosome, a large ribonucleoprotein complex responsible for the synthesis of proteins in the cell. The small ribosomal subunit (SSU) binds messenger RNAs (mRNAs) and translates the encoded message by selecting cognate aminoacyl-transfer RNA (tRNA) molecules. The large subunit (LSU) contains the ribosomal catalytic site termed the peptidyl transferase center (PTC), which catalyzes the formation of peptide bonds, thereby polymerizing the amino acids delivered by tRNAs into a polypeptide chain. The nascent polypeptides leave the ribosome through a tunnel in the LSU and interact with protein factors that function in enzymatic processing, targeting, and the membrane insertion of nascent chains at the exit of the ribosomal tunnel. The chain is Large ribosomal subunit protein uL18 (RPL5) from Solanum melongena (Eggplant).